A 363-amino-acid polypeptide reads, in one-letter code: Probable F-box protein At4g22165 (363 aa).

Residues 7–56 (PNTWSELPLDLLNLVFKRLSLVNFQRAKSVCSTRYSVSRQCVPERQIALL) enclose the F-box domain.

The chain is Probable F-box protein At4g22165 from Arabidopsis thaliana (Mouse-ear cress).